The sequence spans 291 residues: Bifunctional protein FolD (291 aa).

Residues 166 to 168 (GAS) and I232 each bind NADP(+).

This sequence belongs to the tetrahydrofolate dehydrogenase/cyclohydrolase family. In terms of assembly, homodimer.

It carries out the reaction (6R)-5,10-methylene-5,6,7,8-tetrahydrofolate + NADP(+) = (6R)-5,10-methenyltetrahydrofolate + NADPH. It catalyses the reaction (6R)-5,10-methenyltetrahydrofolate + H2O = (6R)-10-formyltetrahydrofolate + H(+). It functions in the pathway one-carbon metabolism; tetrahydrofolate interconversion. Catalyzes the oxidation of 5,10-methylenetetrahydrofolate to 5,10-methenyltetrahydrofolate and then the hydrolysis of 5,10-methenyltetrahydrofolate to 10-formyltetrahydrofolate. The sequence is that of Bifunctional protein FolD from Photorhabdus laumondii subsp. laumondii (strain DSM 15139 / CIP 105565 / TT01) (Photorhabdus luminescens subsp. laumondii).